The following is a 392-amino-acid chain: General receptor for phosphoinositides 1-associated scaffold protein (392 aa).

The interval Met1–Pro50 is disordered. Residues Pro37–Ala49 show a composition bias toward pro residues. Thr76 is modified (phosphothreonine). Ser93 is subject to Phosphoserine. One can recognise a PDZ domain in the interval Val100–Thr189. Residues Val180 to Pro257 are interaction with PSCD3. Tyr236 carries the post-translational modification Phosphotyrosine. Arg269 bears the Omega-N-methylarginine mark. A disordered region spans residues Pro294–Pro315. Phosphoserine is present on Ser384.

Heteromer. Composed of TAMALIN, CYTH2 and at least one GRM1. Also interacts with GRM2, GRM3 and GRM5. Interacts with CYTH3. Highly expressed in brain, heart and lung, and to a lower extent in embryo, kidney and ovary.

It is found in the cytoplasm. It localises to the perinuclear region. Its subcellular location is the cell membrane. The protein resides in the postsynaptic cell membrane. Its function is as follows. Plays a role in intracellular trafficking and contributes to the macromolecular organization of group 1 metabotropic glutamate receptors (mGluRs) at synapses. The chain is General receptor for phosphoinositides 1-associated scaffold protein from Mus musculus (Mouse).